Here is a 320-residue protein sequence, read N- to C-terminus: Putative fatty acid elongase 3 (320 aa).

The N-linked (GlcNAc...) asparagine glycan is linked to Asn-14. 6 consecutive transmembrane segments (helical) span residues 33–53 (WMQNHWYQSITASVVYVAVIF), 67–87 (LDTPLFVWNSFLAIFSILGFL), 120–140 (FWTEQFAMSKLFELIDTIFIV), 145–165 (PLIFLHWYHHVTVMIYTWHAY), 203–223 (MAMVVTTLQLAQMVMGVIIGV), and 242–262 (LGLCFGVYFTYFLLFANFFYH).

It belongs to the ELO family.

Its subcellular location is the membrane. It carries out the reaction a very-long-chain acyl-CoA + malonyl-CoA + H(+) = a very-long-chain 3-oxoacyl-CoA + CO2 + CoA. It functions in the pathway lipid metabolism; fatty acid biosynthesis. Could be implicated in synthesis of very long chain fatty acids. May be required for normally rapid growth. This chain is Putative fatty acid elongase 3 (elo-3), found in Caenorhabditis elegans.